We begin with the raw amino-acid sequence, 1390 residues long: Bromodomain adjacent to zinc finger domain protein 2 (1390 aa).

3 disordered regions span residues 30-67 (AKIQKATASSPSKSTNGTSASTSAVPSTSGTSSSQNEA), 178-215 (AKKKPAGVASTSSASTSSSTPSTSSASITSSNNNAANN), and 235-269 (QKQQQQQKDTQKKADQAKKAKELAKQQQKEQDVKN). Residues 35–45 (ATASSPSKSTN) show a composition bias toward polar residues. Composition is skewed to low complexity over residues 46–63 (GTSASTSAVPSTSGTSSS) and 186–215 (ASTSSASTSSSTPSTSSASITSSNNNAANN). Residues 243–269 (DTQKKADQAKKAKELAKQQQKEQDVKN) show a composition bias toward basic and acidic residues. The MBD domain occupies 323-395 (KTNEAMLRLP…DNFLFNTKLV (73 aa)). A DDT domain is found at 524–588 (SQGFADALMV…LRLALEFPGM (65 aa)). Positions 705-724 (KEEQNHESDSEPPTRPDTPK) are enriched in basic and acidic residues. The disordered stretch occupies residues 705–729 (KEEQNHESDSEPPTRPDTPKKATVA). The segment at 1100 to 1149 (EALCQICKSMDGDEMLVCDGCESGCHMECFRPRMTKVPEGDWFCQRCREE) adopts a PHD-type zinc-finger fold. Residues 1218–1241 (EERELEDDNHAENGENTKNGHMNG) are disordered. One can recognise a Bromo domain in the interval 1273-1377 (LPKNMNKELC…KFFQKRWKQL (105 aa)).

Belongs to the WAL family. In terms of assembly, interacts with set-6. Broadly expressed in the nervous system, including head, body and tail neurons.

The protein resides in the nucleus. It localises to the chromosome. Chromatin reader protein, involved in positively modulating the rate of age-related behavioral deterioration. Positively modulates the level of global trimethylated 'Lys-9' of histone H3 (H3K9me3), but not of H3K9me2 or H3K9me1. May repress the expression of mitochondrial function-related genes by occupying their promoter regions, working in concert with histone methyltransferase, set-6. Involved in modulation of the mitochondrial unfolded protein response (UPR). Negatively regulates expression of bas-1, a serotonin (5-HT) and dopamine synthesizing enzyme (DOPA decarboxylase), with aging. Negatively modulates levels of endogenous 5-HT and dopamine with aging. Involved in modulating longevity, probably as a result of enhanced stress resistance via mechanisms related to dietary restriction and mitochondrial function. This Caenorhabditis elegans protein is Bromodomain adjacent to zinc finger domain protein 2.